Here is a 355-residue protein sequence, read N- to C-terminus: Tyrosine recombinase XerC (355 aa).

Residues 4 to 89 enclose the Core-binding (CB) domain; that stretch reads TQFDGDIDSF…AVRGFFAWAY (86 aa). Positions 137-181 are disordered; the sequence is KDDGGAAAAPGSGKAAGKTADKSADTVNRSEAPARADKRDNARVT. Low complexity predominate over residues 141–154; that stretch reads GAAAAPGSGKAAGK. Residues 158 to 349 enclose the Tyr recombinase domain; it reads KSADTVNRSE…SIEQLKNRYG (192 aa). Over residues 168–178 the composition is skewed to basic and acidic residues; that stretch reads APARADKRDNA. Active-site residues include Arg-200, Lys-224, His-301, Arg-304, and His-327. Catalysis depends on Tyr-336, which acts as the O-(3'-phospho-DNA)-tyrosine intermediate.

This sequence belongs to the 'phage' integrase family. XerC subfamily. In terms of assembly, forms a cyclic heterotetrameric complex composed of two molecules of XerC and two molecules of XerD.

Its subcellular location is the cytoplasm. Site-specific tyrosine recombinase, which acts by catalyzing the cutting and rejoining of the recombining DNA molecules. The XerC-XerD complex is essential to convert dimers of the bacterial chromosome into monomers to permit their segregation at cell division. It also contributes to the segregational stability of plasmids. This chain is Tyrosine recombinase XerC, found in Bifidobacterium longum (strain DJO10A).